The chain runs to 533 residues: Glucose-6-phosphate isomerase (533 aa).

E341 acts as the Proton donor in catalysis. Residues H372 and K501 contribute to the active site.

This sequence belongs to the GPI family.

It localises to the cytoplasm. The enzyme catalyses alpha-D-glucose 6-phosphate = beta-D-fructose 6-phosphate. It participates in carbohydrate biosynthesis; gluconeogenesis. The protein operates within carbohydrate degradation; glycolysis; D-glyceraldehyde 3-phosphate and glycerone phosphate from D-glucose: step 2/4. Catalyzes the reversible isomerization of glucose-6-phosphate to fructose-6-phosphate. This is Glucose-6-phosphate isomerase from Cereibacter sphaeroides (strain ATCC 17029 / ATH 2.4.9) (Rhodobacter sphaeroides).